Consider the following 470-residue polypeptide: Siroheme synthase (470 aa).

Residues 1-201 (MDYFPIFCQL…NDHVQADQHV (201 aa)) form a precorrin-2 dehydrogenase /sirohydrochlorin ferrochelatase region. Residues 22–23 (EI) and 43–44 (CE) each bind NAD(+). Residue Ser128 is modified to Phosphoserine. The segment at 213–470 (GEVVLVGAGP…KVTECVAHVG (258 aa)) is uroporphyrinogen-III C-methyltransferase. Pro222 contributes to the S-adenosyl-L-methionine binding site. Asp245 serves as the catalytic Proton acceptor. The Proton donor role is filled by Lys267. Residues 298-300 (GGD), Ile303, 328-329 (TA), Met379, and Gly408 contribute to the S-adenosyl-L-methionine site.

In the N-terminal section; belongs to the precorrin-2 dehydrogenase / sirohydrochlorin ferrochelatase family. It in the C-terminal section; belongs to the precorrin methyltransferase family.

The catalysed reaction is uroporphyrinogen III + 2 S-adenosyl-L-methionine = precorrin-2 + 2 S-adenosyl-L-homocysteine + H(+). The enzyme catalyses precorrin-2 + NAD(+) = sirohydrochlorin + NADH + 2 H(+). It carries out the reaction siroheme + 2 H(+) = sirohydrochlorin + Fe(2+). It functions in the pathway cofactor biosynthesis; adenosylcobalamin biosynthesis; precorrin-2 from uroporphyrinogen III: step 1/1. Its pathway is cofactor biosynthesis; adenosylcobalamin biosynthesis; sirohydrochlorin from precorrin-2: step 1/1. The protein operates within porphyrin-containing compound metabolism; siroheme biosynthesis; precorrin-2 from uroporphyrinogen III: step 1/1. It participates in porphyrin-containing compound metabolism; siroheme biosynthesis; siroheme from sirohydrochlorin: step 1/1. It functions in the pathway porphyrin-containing compound metabolism; siroheme biosynthesis; sirohydrochlorin from precorrin-2: step 1/1. Functionally, multifunctional enzyme that catalyzes the SAM-dependent methylations of uroporphyrinogen III at position C-2 and C-7 to form precorrin-2 via precorrin-1. Then it catalyzes the NAD-dependent ring dehydrogenation of precorrin-2 to yield sirohydrochlorin. Finally, it catalyzes the ferrochelation of sirohydrochlorin to yield siroheme. The sequence is that of Siroheme synthase from Yersinia pestis.